A 294-amino-acid polypeptide reads, in one-letter code: IVFRAAQERSDIEIVAINDLLDAEYMAYMLKYDSTHGRFNGTVEVKDGHLVVNGKTIRVTAEKDPANLKWNEVGVDVVAEATGIFLTDETARKHITAGAKKVVLTGPSKDATPMFVRGANFDKYAGQDIVSNASCTTNCLAPLAKVINDNFGIVEGLMTTVHATTATQKTVDGPSHKDWRGGRGASQNIIPSSTGAAKAVGKVIPELKGKLTGMAFRVPTPNVSVVDLTVRLEKPATYEEIKKAMKDAAEGSMKGVLGYVEDDVVSTDFNGEVLTSVFDAKAGIALNDNFVKLV.

NAD(+)-binding residues include D19, K63, and T105. Residues 134 to 136 (SCT) and T165 contribute to the D-glyceraldehyde 3-phosphate site. The Nucleophile role is filled by C135. Residues 169 to 188 (KTVDGPSHKDWRGGRGASQN) form a disordered region. Residues 194-195 (TG) and R217 contribute to the D-glyceraldehyde 3-phosphate site.

The protein belongs to the glyceraldehyde-3-phosphate dehydrogenase family. Homotetramer.

It localises to the cytoplasm. The enzyme catalyses D-glyceraldehyde 3-phosphate + phosphate + NAD(+) = (2R)-3-phospho-glyceroyl phosphate + NADH + H(+). Its pathway is carbohydrate degradation; glycolysis; pyruvate from D-glyceraldehyde 3-phosphate: step 1/5. Functionally, catalyzes the oxidative phosphorylation of glyceraldehyde 3-phosphate (G3P) to 1,3-bisphosphoglycerate (BPG) using the cofactor NAD. The first reaction step involves the formation of a hemiacetal intermediate between G3P and a cysteine residue, and this hemiacetal intermediate is then oxidized to a thioester, with concomitant reduction of NAD to NADH. The reduced NADH is then exchanged with the second NAD, and the thioester is attacked by a nucleophilic inorganic phosphate to produce BPG. The chain is Glyceraldehyde-3-phosphate dehydrogenase (gap) from Serratia marcescens.